The chain runs to 464 residues: Endo-1,4-beta-xylanase A (464 aa).

The signal sequence occupies residues 1-33 (MFRHHPTRGRRTAGLLAAALATLSAGLTAVAPA). In terms of domain architecture, GH10 spans 40-349 (TATLGELAEA…KPAYHAIAAA (310 aa)). Residue E166 is the Proton donor of the active site. E271 serves as the catalytic Nucleophile. In terms of domain architecture, CBM2 spans 354 to 457 (SPAPGGNCTA…TPADVTCTPG (104 aa)).

It belongs to the glycosyl hydrolase 10 (cellulase F) family. Does not require any standard metal (Mg(2+), Mn2(+), Ca(2+)). is required as a cofactor.

The enzyme catalyses Endohydrolysis of (1-&gt;4)-beta-D-xylosidic linkages in xylans.. The protein operates within glycan degradation; xylan degradation. With respect to regulation, completely inhibited by Hg(2+), unaffected by EDTA. In terms of biological role, contributes to hydrolysis of hemicellulose, the major component of plant cell-walls. Hydrolyzes xylan to xylose and xylobiose. The chain is Endo-1,4-beta-xylanase A (xynAS9) from Streptomyces sp.